Consider the following 342-residue polypeptide: Probable endoglucanase (342 aa).

The first 20 residues, 1-20 (MSVMAAMGGAQVLSSTGAFA), serve as a signal peptide directing secretion. The active-site Proton donor is the Glu57. Asp114 serves as the catalytic Nucleophile.

The protein belongs to the glycosyl hydrolase 8 (cellulase D) family.

Its subcellular location is the secreted. It catalyses the reaction Endohydrolysis of (1-&gt;4)-beta-D-glucosidic linkages in cellulose, lichenin and cereal beta-D-glucans.. Enzyme capable of hydrolyzing carboxy-methyl-cellulose (CMC). In Novacetimonas hansenii (Komagataeibacter hansenii), this protein is Probable endoglucanase (cmcAX).